We begin with the raw amino-acid sequence, 441 residues long: Probable indole-3-acetic acid-amido synthetase GH3.9 (441 aa).

It belongs to the IAA-amido conjugating enzyme family. In terms of tissue distribution, expressed in etiolated seedlings and roots.

In terms of biological role, may catalyze the synthesis of indole-3-acetic acid (IAA)-amino acid conjugates, providing a mechanism for the plant to cope with the presence of excess auxin. This is Probable indole-3-acetic acid-amido synthetase GH3.9 (GH3.9) from Oryza sativa subsp. japonica (Rice).